The chain runs to 67 residues: Large ribosomal subunit protein bL35 (67 aa).

The protein belongs to the bacterial ribosomal protein bL35 family.

The chain is Large ribosomal subunit protein bL35 from Sinorhizobium medicae (strain WSM419) (Ensifer medicae).